A 322-amino-acid polypeptide reads, in one-letter code: Major serine/threonine-protein phosphatase PP2A-2 catalytic subunit (322 aa).

The Mn(2+) site is built by D70, H72, D98, and N130. The Proton donor role is filled by H131. Residues H180 and H254 each coordinate Mn(2+). A Leucine methyl ester modification is found at L322.

Belongs to the PPP phosphatase family. PP-2A subfamily. Mn(2+) is required as a cofactor.

It carries out the reaction O-phospho-L-seryl-[protein] + H2O = L-seryl-[protein] + phosphate. The enzyme catalyses O-phospho-L-threonyl-[protein] + H2O = L-threonyl-[protein] + phosphate. Its function is as follows. Essential role in cell cycle control. PP2A may be involved in controlling the entry into mitosis, possibly acting as an inhibitor. The chain is Major serine/threonine-protein phosphatase PP2A-2 catalytic subunit (ppa2) from Schizosaccharomyces pombe (strain 972 / ATCC 24843) (Fission yeast).